The sequence spans 433 residues: MTDFFAGIPQIRYEGEGSSNEFAFRHYNPDEVILGKRMEDHLRFAVAWWHSFAWPGGDPFGGQTFDRPWFGDTLDLAKLKADVAFEMFDILGAPFFCFHDADIRPEGATFAESKRNLEEIVDHIGTRMEGSKTKLLWGTANLFSHRRFMSGAATNPDPDVFAWSAATVKGCMDATMKLGGANYVLWGGREGYETLLNTDLTREAENAGRFLQMVVDYKHKIGFQGTILIEPKPQEPSKHQYDYDVATVYGFLKRFGLEKEVKLNIEQGHAILAGHSFEHELALAASLGILGSIDMNRNDYQSGWDTDQFPHNHPEMALAYYEILRAGGFTTGGTNFDAKIRRQSLDPEDLVLAHVGGMDTCARALKAAARLYEDGSLETARAARYAGWETPEAQAMLASSLEEIEARVLAEGINPKPRSGRQERLENLWNRFV.

Residues Asp305 and Asp307 each contribute to the Mg(2+) site.

The protein belongs to the xylose isomerase family. Homotetramer. The cofactor is Mg(2+).

Its subcellular location is the cytoplasm. The catalysed reaction is alpha-D-xylose = alpha-D-xylulofuranose. The polypeptide is Xylose isomerase (Cereibacter sphaeroides (strain KD131 / KCTC 12085) (Rhodobacter sphaeroides)).